The primary structure comprises 515 residues: Putative pumilio homolog 8, chloroplastic (515 aa).

The disordered stretch occupies residues 1–33 (MMRGEFGEASSLSRSPSSPLQTEPHPQSPKFYR). A chloroplast-targeting transit peptide spans 1–70 (MMRGEFGEAS…LSSYFSNGLC (70 aa)). Low complexity predominate over residues 10–20 (SSLSRSPSSPL). The 342-residue stretch at 174–515 (SGVGALFDHQ…RIFSRNLLKN (342 aa)) folds into the PUM-HD domain. 8 Pumilio repeats span residues 198 to 233 (EFQG…VIFS), 234 to 269 (EVIP…QIIL), 270 to 308 (MVTS…SLVK), 310 to 345 (ALRP…FIFE), 346 to 381 (DATK…KLVT), 382 to 417 (EISR…AMLA), 418 to 456 (QLKG…ELIS), and 457 to 490 (VPHF…TLVE).

The protein localises to the plastid. It localises to the chloroplast. The protein resides in the cytoplasm. Sequence-specific RNA-binding protein that regulates translation and mRNA stability by binding the 3'-UTR of target mRNAs. This Arabidopsis thaliana (Mouse-ear cress) protein is Putative pumilio homolog 8, chloroplastic (APUM8).